The following is a 460-amino-acid chain: Probable protein phosphatase 2C 38 (460 aa).

Disordered stretches follow at residues 1-30 (MVAVTGGRPPGLQDAPGAPPPAPAAEAVPS) and 83-111 (RPMRRRRRGGSSSSSSSPRDREPRDGRIA). The span at 100-109 (PRDREPRDGR) shows a compositional bias: basic and acidic residues. A PPM-type phosphatase domain is found at 118–432 (AASLYTMRGN…DDCAVVCLFL (315 aa)). Residues Asp-154 and Gly-155 each contribute to the Mn(2+) site. The interval 192 to 219 (VTSSMTEGGGTERMDRDTETPLGTEENG) is disordered. The segment covering 201–210 (GTERMDRDTE) has biased composition (basic and acidic residues). 2 residues coordinate Mn(2+): Asp-377 and Asp-423.

Belongs to the PP2C family. Mg(2+) is required as a cofactor. Mn(2+) serves as cofactor.

It carries out the reaction O-phospho-L-seryl-[protein] + H2O = L-seryl-[protein] + phosphate. It catalyses the reaction O-phospho-L-threonyl-[protein] + H2O = L-threonyl-[protein] + phosphate. This chain is Probable protein phosphatase 2C 38, found in Oryza sativa subsp. japonica (Rice).